We begin with the raw amino-acid sequence, 518 residues long: Lysine--tRNA ligase (518 aa).

The Mg(2+) site is built by glutamate 407 and glutamate 414.

The protein belongs to the class-II aminoacyl-tRNA synthetase family. Homodimer. Requires Mg(2+) as cofactor.

Its subcellular location is the cytoplasm. The enzyme catalyses tRNA(Lys) + L-lysine + ATP = L-lysyl-tRNA(Lys) + AMP + diphosphate. In Helicobacter hepaticus (strain ATCC 51449 / 3B1), this protein is Lysine--tRNA ligase.